The chain runs to 194 residues: Leucyl/phenylalanyl-tRNA--protein transferase (194 aa).

The protein belongs to the L/F-transferase family.

Its subcellular location is the cytoplasm. The enzyme catalyses N-terminal L-lysyl-[protein] + L-leucyl-tRNA(Leu) = N-terminal L-leucyl-L-lysyl-[protein] + tRNA(Leu) + H(+). The catalysed reaction is N-terminal L-arginyl-[protein] + L-leucyl-tRNA(Leu) = N-terminal L-leucyl-L-arginyl-[protein] + tRNA(Leu) + H(+). It carries out the reaction L-phenylalanyl-tRNA(Phe) + an N-terminal L-alpha-aminoacyl-[protein] = an N-terminal L-phenylalanyl-L-alpha-aminoacyl-[protein] + tRNA(Phe). In terms of biological role, functions in the N-end rule pathway of protein degradation where it conjugates Leu, Phe and, less efficiently, Met from aminoacyl-tRNAs to the N-termini of proteins containing an N-terminal arginine or lysine. This Chlorobaculum tepidum (strain ATCC 49652 / DSM 12025 / NBRC 103806 / TLS) (Chlorobium tepidum) protein is Leucyl/phenylalanyl-tRNA--protein transferase.